We begin with the raw amino-acid sequence, 215 residues long: 3-isopropylmalate dehydratase small subunit (215 aa).

This sequence belongs to the LeuD family. LeuD type 1 subfamily. As to quaternary structure, heterodimer of LeuC and LeuD.

It catalyses the reaction (2R,3S)-3-isopropylmalate = (2S)-2-isopropylmalate. It functions in the pathway amino-acid biosynthesis; L-leucine biosynthesis; L-leucine from 3-methyl-2-oxobutanoate: step 2/4. Catalyzes the isomerization between 2-isopropylmalate and 3-isopropylmalate, via the formation of 2-isopropylmaleate. This Polynucleobacter necessarius subsp. necessarius (strain STIR1) protein is 3-isopropylmalate dehydratase small subunit.